The sequence spans 227 residues: Venom allergen 5 (227 aa).

The first 23 residues, 1 to 23, serve as a signal peptide directing secretion; the sequence is MEISGLVYLIIIVTIIDLPYGKA. 4 cysteine pairs are disulfide-bonded: cysteine 27–cysteine 40, cysteine 31–cysteine 124, cysteine 49–cysteine 117, and cysteine 193–cysteine 210. In terms of domain architecture, SCP spans 68 to 212; that stretch reads LKEHNDFRQK…WHYHYLVCNY (145 aa).

It belongs to the CRISP family. Venom allergen 5-like subfamily. In terms of tissue distribution, expressed by the venom gland.

It localises to the secreted. This is Venom allergen 5 from Vespula maculifrons (Eastern yellow jacket).